The sequence spans 74 residues: uncharacterized protein (74 aa).

This is an uncharacterized protein from Acidianus hospitalis (AFV-1).